The primary structure comprises 197 residues: Ribosome maturation factor RimM (197 aa).

Residues 99 to 174 (EDEFYQVDLI…LVVEPVAAGL (76 aa)) enclose the PRC barrel domain.

This sequence belongs to the RimM family. As to quaternary structure, binds ribosomal protein uS19.

Its subcellular location is the cytoplasm. An accessory protein needed during the final step in the assembly of 30S ribosomal subunit, possibly for assembly of the head region. Essential for efficient processing of 16S rRNA. May be needed both before and after RbfA during the maturation of 16S rRNA. It has affinity for free ribosomal 30S subunits but not for 70S ribosomes. The polypeptide is Ribosome maturation factor RimM (Bartonella quintana (strain Toulouse) (Rochalimaea quintana)).